Reading from the N-terminus, the 956-residue chain is Zinc finger CCHC domain-containing protein 14 (956 aa).

8 disordered regions span residues 25 to 50 (SSLNSGGGGGGGGGGGGKSAPGPSGA), 78 to 99 (ALHTSAHSTEESLPKRPLGKHG), 206 to 229 (SSSSPSQQLQSPSPGNPSLPKVGA), 243 to 276 (GIPSSQSSAQHHLQHSASTSASLPHCSHTGGTGS), 361 to 464 (KEKS…EKEK), 485 to 505 (PVQNETGSSPAAHHPLPPQLM), 543 to 583 (LEER…QGLS), and 750 to 786 (FYSGGAGSSSPGNIPASSQSHHHHHHHQQPPAPPQPA). Residues 29 to 43 (SGGGGGGGGGGGGKS) are compositionally biased toward gly residues. Low complexity-rich tracts occupy residues 206–225 (SSSSPSQQLQSPSPGNPSLP) and 246–265 (SSQSSAQHHLQHSASTSASL). The segment covering 369-389 (LNSSAPSLVTSSGVARVTPTS) has biased composition (polar residues). Residues 423-432 (SSEYSSSSSS) show a composition bias toward low complexity. Positions 438 to 464 (VREESSDSAEESDRRVDIHVEGTEKEK) are enriched in basic and acidic residues. Low complexity predominate over residues 750–768 (FYSGGAGSSSPGNIPASSQ). A CCHC-type zinc finger spans residues 913–930 (LSCYNCGATGHRAQDCKQ).

The polypeptide is Zinc finger CCHC domain-containing protein 14 (Zcchc14) (Mus musculus (Mouse)).